Reading from the N-terminus, the 483-residue chain is Serralysin (483 aa).

Histidine 184 is a Zn(2+) binding site. Glutamate 185 is a catalytic residue. 2 residues coordinate Zn(2+): histidine 188 and histidine 194. Ca(2+)-binding residues include arginine 263, aspartate 266, aspartate 295, glycine 297, glycine 298, aspartate 300, threonine 337, and glutamate 339. 2 Hemolysin-type calcium-binding repeats span residues 342 to 359 (IGGSGNDILIGNDAENIL) and 360 to 377 (KGGAGDDIIYGGLGADQL).

Belongs to the peptidase M10B family. Requires Zn(2+) as cofactor. It depends on Ca(2+) as a cofactor.

It is found in the secreted. It carries out the reaction Preferential cleavage of bonds with hydrophobic residues in P1'.. With respect to regulation, inhibited by 8 mM 1,10-phenanthroline and 10 mM EDTA, but not by PMSF. In terms of biological role, involved in the inhibition of insect antibacterial peptides. Reduces the antibacterial activity of G.mellonella hemolymph by 50%. Reduces the antibacterial activity of cecropin A by 80% and cecropin B by 75%. The protein is Serralysin of Photorhabdus sp. (strain Az29).